A 253-amino-acid chain; its full sequence is Demethylmenaquinone methyltransferase (253 aa).

S-adenosyl-L-methionine contacts are provided by residues T75, D96, and 124–125 (DA).

It belongs to the class I-like SAM-binding methyltransferase superfamily. MenG/UbiE family.

It catalyses the reaction a 2-demethylmenaquinol + S-adenosyl-L-methionine = a menaquinol + S-adenosyl-L-homocysteine + H(+). It participates in quinol/quinone metabolism; menaquinone biosynthesis; menaquinol from 1,4-dihydroxy-2-naphthoate: step 2/2. Methyltransferase required for the conversion of demethylmenaquinol (DMKH2) to menaquinol (MKH2). This is Demethylmenaquinone methyltransferase from Desulfitobacterium hafniense (strain Y51).